The following is a 641-amino-acid chain: Chaperone protein DnaK (641 aa).

Phosphothreonine; by autocatalysis is present on threonine 198. Basic and acidic residues-rich tracts occupy residues 514–529 (AEAN…EGVE), 540–554 (SSEK…KVSE), and 608–621 (AHAD…RSGD). 2 disordered regions span residues 514-554 (AEAN…KVSE) and 604-641 (QTES…KRSA). Over residues 622–633 (DVVDADYEEVKD) the composition is skewed to acidic residues.

Belongs to the heat shock protein 70 family.

Its function is as follows. Acts as a chaperone. The protein is Chaperone protein DnaK of Sinorhizobium medicae (strain WSM419) (Ensifer medicae).